The following is a 432-amino-acid chain: MESAAGEEGKAAPSLPLATLIGRELRGGGSERPLVRYGHFGFAKRGEDYFLVKPDCLRVPGDPSSAFSVFAVFDGHNGVSAAVFSKEHLLEHVMSAVPQGIGRDDWLQALPRALVAGFVKTDIDFQRKGEASGTTATLVVVDGFTVTVASVGDSRCILDTQGGVISLLTVDHRLEENVEERERVTASGGEVSRLNLCGGQEVGPLRCWPGGLCLSRSIGDTDVGEFIVPIPHVKQVKLSNAGGRLIIASDGIWDALSSEAAAQACRGLPAELAAKLVVKQALKTSGLKDDTTCVVVDIIPSDHSSTPPSLSPKKNQNKLRSLLFGRRSHSSVGKLGNKSASFDSVEELFEEGSAMLDERLGRNFPSKANSSPSRCAICQVDQAPFEDLVTDNGGGCCSAPSTPWVGPYLCSDCRKKKDAMEGKRSSRSTACR.

The PPM-type phosphatase domain occupies 27-298 (GGGSERPLVR…DDTTCVVVDI (272 aa)). Aspartate 74, glycine 75, aspartate 250, and aspartate 289 together coordinate Mn(2+).

Belongs to the PP2C family. It depends on Mg(2+) as a cofactor. The cofactor is Mn(2+).

It carries out the reaction O-phospho-L-seryl-[protein] + H2O = L-seryl-[protein] + phosphate. The catalysed reaction is O-phospho-L-threonyl-[protein] + H2O = L-threonyl-[protein] + phosphate. The protein is Probable protein phosphatase 2C 33 of Oryza sativa subsp. japonica (Rice).